Reading from the N-terminus, the 541-residue chain is Tetratricopeptide repeat protein 8 (541 aa).

Residues 14–47 (YFRRRKFQLCADLCTQMLEKSPYDQEPDPELPVH) form a TPR 1 repeat. The tract at residues 118–137 (PITGFLRPSTQSGRPGTMEQ) is disordered. TPR repeat units follow at residues 251 to 284 (WWWKVQIGKCYYRLGMYREAEKQFKSALKQQEMV), 285 to 317 (DTFLYLAKVYVSLDQPVTALNLFKQGLDKFPGE), 318 to 351 (VTLLCGIARIYEEMNNMSSAAEYYKEVLKQDNTH), 352 to 385 (VEAIACIGSNHFYSDQPEIALRFYRRLLQMGIYN), 386 to 419 (GQLFNNLGLCCFYAQQYDMTLTSFERALSLAENE), 423 to 456 (ADVWYNLGHVAVGIGDTNLAHQCFRLALVNNNNH), and 457 to 490 (AEAYNNLAVLEMRKGHVEQARALLQTASSLAPHM).

In terms of assembly, part of BBSome complex, that contains BBS1, BBS2, BBS4, BBS5, BBS7, BBS8/TTC8, BBS9 and BBIP10. Interacts with PCM1. Interacts with CCDC28B. Interacts with PKD1. As to expression, widely expressed.

It is found in the cytoplasm. The protein resides in the cytoskeleton. It localises to the microtubule organizing center. The protein localises to the centrosome. Its subcellular location is the cell projection. It is found in the cilium membrane. The protein resides in the centriolar satellite. It localises to the cilium. The BBSome complex is thought to function as a coat complex required for sorting of specific membrane proteins to the primary cilia. The BBSome complex is required for ciliogenesis but is dispensable for centriolar satellite function. This ciliogenic function is mediated in part by the Rab8 GDP/GTP exchange factor, which localizes to the basal body and contacts the BBSome. Rab8(GTP) enters the primary cilium and promotes extension of the ciliary membrane. Firstly the BBSome associates with the ciliary membrane and binds to RAB3IP/Rabin8, the guanosyl exchange factor (GEF) for Rab8 and then the Rab8-GTP localizes to the cilium and promotes docking and fusion of carrier vesicles to the base of the ciliary membrane. The BBSome complex, together with the LTZL1, controls SMO ciliary trafficking and contributes to the sonic hedgehog (SHH) pathway regulation. Required for proper BBSome complex assembly and its ciliary localization. The chain is Tetratricopeptide repeat protein 8 (TTC8) from Homo sapiens (Human).